A 103-amino-acid polypeptide reads, in one-letter code: Small ribosomal subunit protein uS10 (103 aa).

Belongs to the universal ribosomal protein uS10 family. In terms of assembly, part of the 30S ribosomal subunit.

Involved in the binding of tRNA to the ribosomes. The polypeptide is Small ribosomal subunit protein uS10 (Campylobacter fetus subsp. fetus (strain 82-40)).